The following is a 180-amino-acid chain: Early nodulin-16 (180 aa).

An N-terminal signal peptide occupies residues 1–22; that stretch reads MASSSPILLMIIFSMWLLISHS. The 105-residue stretch at 25-129 folds into the Phytocyanin domain; it reads TDYLIGDSHN…GLKLAVVVQN (105 aa). Residue Asn67 is glycosylated (N-linked (GlcNAc...) asparagine). Residues Cys83 and Cys117 are joined by a disulfide bond. Asn152 is a glycosylation site (N-linked (GlcNAc...) asparagine). Residue Ser154 is the site of GPI-anchor amidated serine attachment. The propeptide at 155–180 is removed in mature form; sequence GNKGGAAGLGFIMWLGVSLVMMMFLI.

The protein belongs to the early nodulin-like (ENODL) family. In terms of tissue distribution, expressed in developing nodules upon symbiosis with Sinorhizobium meliloti.

Its subcellular location is the symbiosome. It localises to the cell membrane. Functionally, may act as a carbohydrate transporter. The chain is Early nodulin-16 from Medicago truncatula (Barrel medic).